The chain runs to 290 residues: Arginine N-acetyltransferase avaD (290 aa).

157–163 (NQAHFEA) is an acetyl-CoA binding site.

It belongs to the acetyltransferase family. GCN5 subfamily.

The protein operates within secondary metabolite metabolism. In terms of biological role, arginine N-acetyltransferase; part of the cluster that mediates the biosynthesis of a highly modified cyclo-arginine-tryptophan dipeptide (cRW). Within the pathway, avaD catalyzes the N-acetylation of the guanidine group. The first step of the pathway is perfornmed by the arginine-containing cyclodipeptide synthase (RCPDS) avaA that acts as the scaffold-generating enzyme and is responsible for formation of the cyclo-Arg-Trp (cRW) diketopiperazine. AvaB then acts as a multifunctional flavoenzyme that is responsible for generating the cyclo-Arg-formylkynurenine DKP, which can be deformylated by avaC. AvaB then further catalyzes an additional N-oxidation followed by cyclization and dehydration. The next step is an N-acetylation of the guanidine group catalyzed by the arginine N-acetyltransferase avaD. The roles of the additional enzymes identified within the ava cluster still have to be determined. The protein is Arginine N-acetyltransferase avaD of Aspergillus versicolor.